The primary structure comprises 385 residues: V-type proton ATPase subunit C (385 aa).

It belongs to the V-ATPase C subunit family. In terms of assembly, V-ATPase is a heteromultimeric enzyme made up of two complexes: the ATP-hydrolytic V1 complex and the proton translocation V0 complex. The V1 complex consists of three catalytic AB heterodimers that form a heterohexamer, three peripheral stalks each consisting of EG heterodimers, one central rotor including subunits D and F, and the regulatory subunits C and H. The proton translocation complex V0 consists of the proton transport subunit a, a ring of proteolipid subunits c9c'', rotary subunit d, subunits e and f, and the accessory subunits VhaAC45 and ATP6AP2.

Functionally, subunit of the V1 complex of vacuolar(H+)-ATPase (V-ATPase), a multisubunit enzyme composed of a peripheral complex (V1) that hydrolyzes ATP and a membrane integral complex (V0) that translocates protons. V-ATPase is responsible for acidifying and maintaining the pH of intracellular compartments and in some cell types, is targeted to the plasma membrane, where it is responsible for acidifying the extracellular environment. Subunit C is necessary for the assembly of the catalytic sector of the enzyme and is likely to have a specific function in its catalytic activity. This Manduca sexta (Tobacco hawkmoth) protein is V-type proton ATPase subunit C.